The primary structure comprises 350 residues: Heat-inducible transcription repressor HrcA (350 aa).

It belongs to the HrcA family.

In terms of biological role, negative regulator of class I heat shock genes (grpE-dnaK-dnaJ and groELS operons). Prevents heat-shock induction of these operons. This chain is Heat-inducible transcription repressor HrcA, found in Xanthomonas oryzae pv. oryzae (strain KACC10331 / KXO85).